The chain runs to 688 residues: UvrABC system protein B (688 aa).

The region spanning 31 to 414 (GRITAGETDV…LGIADGVVEQ (384 aa)) is the Helicase ATP-binding domain. Residue 44 to 51 (GATGTGKS) participates in ATP binding. A Beta-hairpin motif is present at residues 97 to 120 (YYDYYQPEAYVPQTDTFIEKDSSI). Residues 434 to 600 (QIDDLLEEIR…PLRKRIADIT (167 aa)) form the Helicase C-terminal domain. A disordered region spans residues 614-633 (LAGRDQKRKSPTPSLRSGGI). The 36-residue stretch at 642–677 (ESLIADLNAQMLAAAGELKFELAARLRDELSDLKRD) folds into the UVR domain.

It belongs to the UvrB family. Forms a heterotetramer with UvrA during the search for lesions. Interacts with UvrC in an incision complex.

Its subcellular location is the cytoplasm. The UvrABC repair system catalyzes the recognition and processing of DNA lesions. A damage recognition complex composed of 2 UvrA and 2 UvrB subunits scans DNA for abnormalities. Upon binding of the UvrA(2)B(2) complex to a putative damaged site, the DNA wraps around one UvrB monomer. DNA wrap is dependent on ATP binding by UvrB and probably causes local melting of the DNA helix, facilitating insertion of UvrB beta-hairpin between the DNA strands. Then UvrB probes one DNA strand for the presence of a lesion. If a lesion is found the UvrA subunits dissociate and the UvrB-DNA preincision complex is formed. This complex is subsequently bound by UvrC and the second UvrB is released. If no lesion is found, the DNA wraps around the other UvrB subunit that will check the other stand for damage. In Leifsonia xyli subsp. xyli (strain CTCB07), this protein is UvrABC system protein B.